We begin with the raw amino-acid sequence, 195 residues long: Probable chemoreceptor glutamine deamidase CheD 2 (195 aa).

The protein belongs to the CheD family.

The enzyme catalyses L-glutaminyl-[protein] + H2O = L-glutamyl-[protein] + NH4(+). Functionally, probably deamidates glutamine residues to glutamate on methyl-accepting chemotaxis receptors (MCPs), playing an important role in chemotaxis. The sequence is that of Probable chemoreceptor glutamine deamidase CheD 2 from Burkholderia thailandensis (strain ATCC 700388 / DSM 13276 / CCUG 48851 / CIP 106301 / E264).